The following is a 388-amino-acid chain: Alanine racemase, catabolic (388 aa).

The active-site Proton acceptor; specific for D-alanine is the Lys46. Lys46 carries the N6-(pyridoxal phosphate)lysine modification. Arg145 is a binding site for substrate. The Proton acceptor; specific for L-alanine role is filled by Tyr267. Met315 is a substrate binding site.

Belongs to the alanine racemase family. Requires pyridoxal 5'-phosphate as cofactor.

The catalysed reaction is L-alanine = D-alanine. Its function is as follows. Isomerizes L-alanine to D-alanine which is then oxidized to pyruvate by DadA. The chain is Alanine racemase, catabolic (dadB) from Agrobacterium fabrum (strain C58 / ATCC 33970) (Agrobacterium tumefaciens (strain C58)).